The following is a 312-amino-acid chain: Thioredoxin reductase (312 aa).

33–43 (EGFFSGIAGGQ) lines the FAD pocket. The cysteines at positions 138 and 141 are disulfide-linked. An FAD-binding site is contributed by 283–292 (DVQDKYYRQA).

The protein belongs to the class-II pyridine nucleotide-disulfide oxidoreductase family. Homodimer. FAD serves as cofactor.

It localises to the cytoplasm. The catalysed reaction is [thioredoxin]-dithiol + NADP(+) = [thioredoxin]-disulfide + NADPH + H(+). The protein is Thioredoxin reductase (trxB) of Chlamydia trachomatis serovar D (strain ATCC VR-885 / DSM 19411 / UW-3/Cx).